A 427-amino-acid chain; its full sequence is Cyclic 2,3-diphosphoglycerate synthetase (427 aa).

This sequence belongs to the cyclic 2,3-diphosphoglycerate synthetase family.

Its subcellular location is the cytoplasm. The catalysed reaction is (2R)-2,3-bisphosphoglycerate + ATP + H(+) = cyclic (2R)-2,3-bisphosphoglycerate + ADP + phosphate. Functionally, catalyzes the formation of cyclic 2,3-diphosphoglycerate (cDPG) by formation of an intramolecular phosphoanhydride bond at the expense of ATP. The polypeptide is Cyclic 2,3-diphosphoglycerate synthetase (Pyrococcus abyssi (strain GE5 / Orsay)).